Reading from the N-terminus, the 225-residue chain is MSNTVATMINKRNIMRNYIKIGVAGPVGAGKTALIEKLTREIASKYSVAVITNDIYTQEDAEFLTKNSLLPPERIMGVETGGCPHTAIREDASMNLEAVDEMVTRFPDVEIVFIESGGDNLSATFSPDLADVTIFVIDVAQGEKIPRKGGPGITRSDLLVINKTDLAPFVGADLSVMERDARRMRNGQPFIFTNLMKKENLDGVIGWIEKYALLKNVEEPASLVR.

25–32 (GPVGAGKT) is a GTP binding site.

This sequence belongs to the SIMIBI class G3E GTPase family. UreG subfamily. Homodimer. UreD, UreF and UreG form a complex that acts as a GTP-hydrolysis-dependent molecular chaperone, activating the urease apoprotein by helping to assemble the nickel containing metallocenter of UreC. The UreE protein probably delivers the nickel.

It localises to the cytoplasm. In terms of biological role, facilitates the functional incorporation of the urease nickel metallocenter. This process requires GTP hydrolysis, probably effectuated by UreG. This is Urease accessory protein UreG from Haemophilus influenzae (strain ATCC 51907 / DSM 11121 / KW20 / Rd).